The sequence spans 334 residues: Adenosine deaminase (334 aa).

Zn(2+) is bound by residues histidine 12 and histidine 14. The substrate site is built by histidine 14, aspartate 16, and glycine 170. Zn(2+) is bound at residue histidine 197. The active-site Proton donor is the glutamate 200. Aspartate 278 is a binding site for Zn(2+). Position 279 (aspartate 279) interacts with substrate.

It belongs to the metallo-dependent hydrolases superfamily. Adenosine and AMP deaminases family. Adenosine deaminase subfamily. It depends on Zn(2+) as a cofactor.

It carries out the reaction adenosine + H2O + H(+) = inosine + NH4(+). The enzyme catalyses 2'-deoxyadenosine + H2O + H(+) = 2'-deoxyinosine + NH4(+). Catalyzes the hydrolytic deamination of adenosine and 2-deoxyadenosine. The protein is Adenosine deaminase of Vibrio cholerae serotype O1 (strain ATCC 39541 / Classical Ogawa 395 / O395).